A 632-amino-acid polypeptide reads, in one-letter code: Sodium- and chloride-dependent GABA transporter 3 (632 aa).

Positions 1–41 (MTAEKALPLGNGKAAEEARESEAPGGGCSSGGAAPARHPRV) are disordered. Residues 1-58 (MTAEKALPLGNGKAAEEARESEAPGGGCSSGGAAPARHPRVKRDKAVHERGHWNNKVE) are Cytoplasmic-facing. S21 is subject to Phosphoserine. 3 helical membrane-spanning segments follow: residues 59-79 (FVLS…FPYL), 87-106 (AFLI…VFFL), and 131-151 (GIGY…IIIL). Residues 152–225 (AWAIFYLSNC…DGIEHIGNLR (74 aa)) are Extracellular-facing. 3 N-linked (GlcNAc...) asparagine glycosylation sites follow: N187, N190, and N198. 9 helical membrane-spanning segments follow: residues 226-244 (WELA…FCIW), 253-270 (VVYV…ILLI), 306-323 (IFFS…LGSY), 335-356 (IMLC…FSVL), 389-408 (MPLS…FLGL), 438-456 (LLIL…VMLT), 473-493 (GMCL…VYGS), 514-533 (WCWM…FFLI), and 553-571 (IGWL…WICI). Residues 572–632 (TVWKTEGTLP…AAITEKETHF (61 aa)) lie on the Cytoplasmic side of the membrane.

It belongs to the sodium:neurotransmitter symporter (SNF) (TC 2.A.22) family. SLC6A11 subfamily. In terms of tissue distribution, widespread distribution in the brain.

Its subcellular location is the cell membrane. It carries out the reaction 4-aminobutanoate(out) + chloride(out) + 2 Na(+)(out) = 4-aminobutanoate(in) + chloride(in) + 2 Na(+)(in). The enzyme catalyses taurine(out) + chloride(out) + 2 Na(+)(out) = taurine(in) + chloride(in) + 2 Na(+)(in). It catalyses the reaction beta-alanine(out) + chloride(out) + 2 Na(+)(out) = beta-alanine(in) + chloride(in) + 2 Na(+)(in). The catalysed reaction is hypotaurine(out) + chloride(out) + 2 Na(+)(out) = hypotaurine(in) + chloride(in) + 2 Na(+)(in). GABA transport is inhibited by SNAP-5114. Functionally, mediates sodium- and chloride-dependent transport of gamma-aminobutyric acid (GABA). Can also mediate transport of beta-alanine and to a lower extent that of taurine and hypotaurine. This Homo sapiens (Human) protein is Sodium- and chloride-dependent GABA transporter 3 (SLC6A11).